A 317-amino-acid chain; its full sequence is Beta-sarcoglycan (317 aa).

Residues 1–31 (MAAAAAATEQQSSNGPVKKSMREKAVERRNV) form a disordered region. Over 1–64 (MAAAAAATEQ…GLRGRKGNLA (64 aa)) the chain is Cytoplasmic. Basic and acidic residues predominate over residues 20–31 (SMREKAVERRNV). Residues 65 to 85 (ICVIVLLFILAVINLIITLVI) traverse the membrane as a helical; Signal-anchor for type II membrane protein segment. The Extracellular segment spans residues 86–317 (WAVIRIGPNG…TSDNPCGDLY (232 aa)). Asparagine 157, asparagine 210, and asparagine 257 each carry an N-linked (GlcNAc...) asparagine glycan. Intrachain disulfides connect cysteine 287–cysteine 313 and cysteine 289–cysteine 306.

The protein belongs to the sarcoglycan beta/delta/gamma/zeta family. As to quaternary structure, cross-link to form 2 major subcomplexes: one consisting of SGCB, SGCD and SGCG and the other consisting of SGCB and SGCD. The association between SGCB and SGCG is particularly strong while SGCA is loosely associated with the other sarcoglycans. Post-translationally, disulfide bonds are present.

The protein resides in the cell membrane. Its subcellular location is the sarcolemma. It localises to the cytoplasm. The protein localises to the cytoskeleton. Functionally, component of the sarcoglycan complex, a subcomplex of the dystrophin-glycoprotein complex which forms a link between the F-actin cytoskeleton and the extracellular matrix. This Bos taurus (Bovine) protein is Beta-sarcoglycan (SGCB).